The following is a 360-amino-acid chain: Nucleoporin SEH1 (360 aa).

WD repeat units follow at residues 10–49, 55–96, 111–152, 160–210, 217–258, and 276–315; these read DHKDLIHDVSFDFHGRRMATCSSDQSVKVWDKSESGDWHC, THSG…SNDK, DSRT…NLSQ, SCKL…RKYA, TVTD…KELT, and NHNSQVWRVSWNITGTVLASSGDDGCVRLWKANYMDNWKC. K12 is covalently cross-linked (Glycyl lysine isopeptide (Lys-Gly) (interchain with G-Cter in SUMO2)). A phosphoserine mark is found at S179 and S190. A compositionally biased stretch (polar residues) spans 324–354; sequence SPVNGSSQQGTSNPSLGSNIPSLQNSLNGSS. The interval 324 to 360 is disordered; it reads SPVNGSSQQGTSNPSLGSNIPSLQNSLNGSSAGRKHS.

Belongs to the WD repeat SEC13 family. In terms of assembly, component of the Nup107-160 subcomplex of the nuclear pore complex (NPC). The Nup107-160 subcomplex includes NUP160, NUP133, NUP107, NUP98, NUP85, NUP43, NUP37, SEH1 and SEC13. The SEH1 subunit appears to be only weakly associated with the Nup107-160 subcomplex. Component of the GATOR2 subcomplex, composed of MIOS, SEC13, SEH1L, WDR24 and WDR59. The GATOR2 complex interacts with CASTOR1 and CASTOR2; the interaction is negatively regulated by arginine. The GATOR2 complex interacts with SESN1, SESN2 and SESN3; the interaction is negatively regulated by amino acids. SESN1, SESN2 and SESN3 convey leucine availability via direct interaction with SEH1L and WDR24.

It is found in the chromosome. It localises to the centromere. The protein localises to the kinetochore. Its subcellular location is the nucleus. The protein resides in the nuclear pore complex. It is found in the lysosome membrane. With respect to regulation, the GATOR2 complex is negatively regulated by the upstream amino acid sensors CASTOR1 and SESN2, which sequester the GATOR2 complex in absence of amino acids. In the presence of abundant amino acids, GATOR2 is released from CASTOR1 and SESN2 and activated. Component of the Nup107-160 subcomplex of the nuclear pore complex (NPC). The Nup107-160 subcomplex is required for the assembly of a functional NPC. The Nup107-160 subcomplex is also required for normal kinetochore microtubule attachment, mitotic progression and chromosome segregation. This subunit plays a role in recruitment of the Nup107-160 subcomplex to the kinetochore. Its function is as follows. As a component of the GATOR2 complex, functions as an activator of the amino acid-sensing branch of the mTORC1 signaling pathway. The GATOR2 complex indirectly activates mTORC1 through the inhibition of the GATOR1 subcomplex. GATOR2 probably acts as an E3 ubiquitin-protein ligase toward GATOR1. In the presence of abundant amino acids, the GATOR2 complex mediates ubiquitination of the NPRL2 core component of the GATOR1 complex, leading to GATOR1 inactivation. In the absence of amino acids, GATOR2 is inhibited, activating the GATOR1 complex. Within the GATOR2 complex, SEC13 and SEH1L are required to stabilize the complex. The chain is Nucleoporin SEH1 (SEH1L) from Pongo abelii (Sumatran orangutan).